We begin with the raw amino-acid sequence, 165 residues long: uncharacterized protein (165 aa).

A helical transmembrane segment spans residues 10 to 27 (VSLTIVFVLFFSADVSLT).

It localises to the membrane. This is an uncharacterized protein from Saccharomyces cerevisiae (strain ATCC 204508 / S288c) (Baker's yeast).